Consider the following 62-residue polypeptide: Large ribosomal subunit protein bL28 (62 aa).

Residues 1 to 28 form a disordered region; it reads MARKCVITGRKSRSGNSRSHAMNASKRT. Residues 14–26 show a composition bias toward polar residues; the sequence is SGNSRSHAMNASK.

It belongs to the bacterial ribosomal protein bL28 family.

The sequence is that of Large ribosomal subunit protein bL28 from Bacillus licheniformis (strain ATCC 14580 / DSM 13 / JCM 2505 / CCUG 7422 / NBRC 12200 / NCIMB 9375 / NCTC 10341 / NRRL NRS-1264 / Gibson 46).